Reading from the N-terminus, the 1556-residue chain is Lysine-specific demethylase 5C (1556 aa).

The JmjN domain occupies 14–55 (CPVFEPSWAEFRDPLGYIAKIRPIAEKSGICKIRPPADWQPP). Residues 79–169 (TRVKLNYLDQ…IVYPYEMYQS (91 aa)) enclose the ARID domain. Polar residues predominate over residues 197 to 207 (LRQSVQPSKFN). The interval 197–227 (LRQSVQPSKFNSYGRRAKRLQPDPEPTEEDI) is disordered. Glycyl lysine isopeptide (Lys-Gly) (interchain with G-Cter in SUMO2) cross-links involve residues K205, K229, K244, and K274. The segment at 257–303 (LRKKDKEGPECPPTVVVKEESGGDVKVESTSPKTFLESKEELSHSPE) is disordered. Over residues 273–283 (VKEESGGDVKV) the composition is skewed to basic and acidic residues. S287 is subject to Phosphoserine. K295 participates in a covalent cross-link: Glycyl lysine isopeptide (Lys-Gly) (interchain with G-Cter in SUMO2). Phosphoserine occurs at positions 301 and 317. A PHD-type 1 zinc finger spans residues 324-374 (SYVCRMCSRGDEDDKLLLCDGCDDNYHIFCLLPPLPEIPKGVWRCPKCVMA). The JmjC domain occupies 468–634 (EYATSGWNLN…AGRQCIEHYR (167 aa)). Residues H514, D517, and H602 each contribute to the Fe cation site. S893 and S897 each carry phosphoserine. K1127 participates in a covalent cross-link: Glycyl lysine isopeptide (Lys-Gly) (interchain with G-Cter in SUMO2). Residues 1185 to 1250 (TSVCVCGQVP…KFLCPLCMRS (66 aa)) form a PHD-type 2 zinc finger. Disordered stretches follow at residues 1315–1362 (LQAE…SPEK) and 1441–1556 (ERHG…QQQL). Positions 1335-1345 (PLREGSGKDMP) are enriched in basic and acidic residues. S1359 carries the phosphoserine modification. A compositionally biased stretch (basic residues) spans 1445–1460 (SRARGRALERRRRRKV). Over residues 1461–1478 (DRGGEGDDPAREELEPKR) the composition is skewed to basic and acidic residues. Over residues 1485–1500 (EAEEAQEEEELEEETG) the composition is skewed to acidic residues. Composition is skewed to polar residues over residues 1513 to 1522 (SPSTQENQNG) and 1530 to 1540 (SGPSAPFSTLS). The span at 1541–1556 (PQLHVPCPQQPPQQQL) shows a compositional bias: low complexity.

This sequence belongs to the JARID1 histone demethylase family. As to quaternary structure, part of two distinct complexes, one containing E2F6, and the other containing REST. Interacts with ZMYND8. It depends on Fe(2+) as a cofactor.

The protein resides in the nucleus. It carries out the reaction N(6),N(6),N(6)-trimethyl-L-lysyl(4)-[histone H3] + 3 2-oxoglutarate + 3 O2 = L-lysyl(4)-[histone H3] + 3 formaldehyde + 3 succinate + 3 CO2. Histone demethylase that specifically demethylates 'Lys-4' of histone H3, thereby playing a central role in histone code. Does not demethylate histone H3 'Lys-9', H3 'Lys-27', H3 'Lys-36', H3 'Lys-79' or H4 'Lys-20'. Demethylates trimethylated and dimethylated but not monomethylated H3 'Lys-4'. Participates in transcriptional repression of neuronal genes by recruiting histone deacetylases and REST at neuron-restrictive silencer elements. Represses the CLOCK-BMAL1 heterodimer-mediated transcriptional activation of the core clock component PER2. The protein is Lysine-specific demethylase 5C (KDM5C) of Canis lupus familiaris (Dog).